We begin with the raw amino-acid sequence, 75 residues long: Putative DNA-directed RNA polymerase subunit omega (75 aa).

Belongs to the RNA polymerase subunit omega family.

Its subcellular location is the plastid. It localises to the chloroplast. The enzyme catalyses RNA(n) + a ribonucleoside 5'-triphosphate = RNA(n+1) + diphosphate. In terms of biological role, may be involved in RNA polymerase activity. This Pyropia yezoensis (Susabi-nori) protein is Putative DNA-directed RNA polymerase subunit omega.